The primary structure comprises 187 residues: MVAATVAAAWLLLWAAACAQQEQDFYDFKAVNIRGKLVSLEKYRGSVSLVVNVASECGFTDQHYRALQQLQRDLGPHHFNVLAFPCNQFGQQEPDSNKEIESFARRTYSVSFPMFSKIAVTGTGAHPAFKYLAQTSGKEPTWNFWKYLVAPDGKVVGAWDPTVSVEEVRPQITALVRKLILLKREDL.

The first 19 residues, 1 to 19 (MVAATVAAAWLLLWAAACA), serve as a signal peptide directing secretion. Cys-57 is an active-site residue.

Belongs to the glutathione peroxidase family. Expressed in esophageal epithelial cells; expression is up-regulated after exposure to acidic bile acids.

The protein resides in the secreted. The enzyme catalyses 2 glutathione + H2O2 = glutathione disulfide + 2 H2O. Functionally, it protects esophageal epithelia from hydrogen peroxide-induced oxidative stress. It suppresses acidic bile acid-induced reactive oxygen species (ROS) and protects against oxidative DNA damage and double-strand breaks. The sequence is that of Glutathione peroxidase 7 (GPX7) from Homo sapiens (Human).